The chain runs to 196 residues: Adenylate kinase (196 aa).

9-17 (GIPGVGKST) lines the ATP pocket.

It belongs to the archaeal adenylate kinase family.

The protein localises to the cytoplasm. It catalyses the reaction AMP + ATP = 2 ADP. This is Adenylate kinase (adkA) from Pyrococcus abyssi (strain GE5 / Orsay).